A 649-amino-acid chain; its full sequence is Threonine--tRNA ligase (649 aa).

A TGS domain is found at 1–60 (MHVVLPDGKQLELPMGATALDAASAIGPRLAQDALAATANGELVDLMTPLPDGASITLIT). The segment at 248–544 (DHRKLGRELE…LIEHYAGDFP (297 aa)) is catalytic. The Zn(2+) site is built by Cys-341, His-392, and His-521.

It belongs to the class-II aminoacyl-tRNA synthetase family. Homodimer. Zn(2+) is required as a cofactor.

The protein resides in the cytoplasm. The catalysed reaction is tRNA(Thr) + L-threonine + ATP = L-threonyl-tRNA(Thr) + AMP + diphosphate + H(+). Catalyzes the attachment of threonine to tRNA(Thr) in a two-step reaction: L-threonine is first activated by ATP to form Thr-AMP and then transferred to the acceptor end of tRNA(Thr). Also edits incorrectly charged L-seryl-tRNA(Thr). This Deinococcus deserti (strain DSM 17065 / CIP 109153 / LMG 22923 / VCD115) protein is Threonine--tRNA ligase.